We begin with the raw amino-acid sequence, 314 residues long: MEDFHHVTVLLKEAVAGLAIKPTGVYVDCTLGGGGHSQRILEQLTTGHLYAFDQDQTAITYNEEHLKTYLDAGKLTFIKSNFRQIQTELTERGITQVDGILYDLGVSSPQFDEADRGFSYQHDAPLDMRMDQSQKLSAWIVVNEWSFNDLLRIFHRYGEEKFAKPIARAIERHREQAPIDTTGQLVEIIKEGIPAAARRHGGHPAKKVFQAIRIAVNDELGALEDSLEQAVSLLDVNGRISVITFQSLEDRLVKTMFREQSSLPELPHGIPVIPDNLQPDFKLVNHKPILPSEEELAVNHRAHSAKLRILEKIK.

Residues 34–36, Asp53, Phe82, Asp103, and Gln110 contribute to the S-adenosyl-L-methionine site; that span reads GGH.

The protein belongs to the methyltransferase superfamily. RsmH family.

Its subcellular location is the cytoplasm. The catalysed reaction is cytidine(1402) in 16S rRNA + S-adenosyl-L-methionine = N(4)-methylcytidine(1402) in 16S rRNA + S-adenosyl-L-homocysteine + H(+). Specifically methylates the N4 position of cytidine in position 1402 (C1402) of 16S rRNA. This chain is Ribosomal RNA small subunit methyltransferase H, found in Levilactobacillus brevis (strain ATCC 367 / BCRC 12310 / CIP 105137 / JCM 1170 / LMG 11437 / NCIMB 947 / NCTC 947) (Lactobacillus brevis).